We begin with the raw amino-acid sequence, 244 residues long: MKTTLAERLKTARTAQGLSQKALGDMIGVSQAAIQKIEVGKASQTTKIVELSNNLRVRPEWLANGEGPMRSSEVTRSLQEPSIPPKSEWGTVSAWDSTTELSEDEVEVPFLKDIEFACGDGRIQSEDYNGFKLRFSKATLRKVGANTDGSGVLCFPAAGDSMEPIIPDGTTVAVDTNNKRIIDGKLYAIAQEGGGNDKLKRIKQLYRKPGGLLTIHSFNRETDEEAYESDVEIIGRVFWYSVLL.

Residues Leu-9 to Leu-62 form the HTH cro/C1-type domain. Residues Gln-20–Val-39 constitute a DNA-binding region (H-T-H motif).

Functionally, regulates pectin lyase production in response to DNA damage. The polypeptide is HTH-type transcriptional regulator RdgA (rdgA) (Pectobacterium carotovorum subsp. carotovorum (Erwinia carotovora subsp. carotovora)).